The primary structure comprises 904 residues: Alanine--tRNA ligase (904 aa).

His-584, His-588, Cys-687, and His-691 together coordinate Zn(2+).

It belongs to the class-II aminoacyl-tRNA synthetase family. Zn(2+) serves as cofactor.

The protein localises to the cytoplasm. It carries out the reaction tRNA(Ala) + L-alanine + ATP = L-alanyl-tRNA(Ala) + AMP + diphosphate. Functionally, catalyzes the attachment of alanine to tRNA(Ala) in a two-step reaction: alanine is first activated by ATP to form Ala-AMP and then transferred to the acceptor end of tRNA(Ala). Also edits incorrectly charged Ser-tRNA(Ala) and Gly-tRNA(Ala) via its editing domain. The chain is Alanine--tRNA ligase from Mycobacterium tuberculosis (strain ATCC 25177 / H37Ra).